A 264-amino-acid polypeptide reads, in one-letter code: Small ribosomal subunit protein uS3 (264 aa).

The 69-residue stretch at 39–107 (VREFLKKKLK…PVHVNIEEIR (69 aa)) folds into the KH type-2 domain. Residues 211–264 (NDAPVVEEPQEERRKRPGRPEGRRREGEGRPGGQRRGAGAGGRRSGGADAKTGE) are disordered. Residues 221–239 (EERRKRPGRPEGRRREGEG) show a composition bias toward basic and acidic residues. The segment covering 240-255 (RPGGQRRGAGAGGRRS) has biased composition (gly residues).

The protein belongs to the universal ribosomal protein uS3 family. In terms of assembly, part of the 30S ribosomal subunit. Forms a tight complex with proteins S10 and S14.

Functionally, binds the lower part of the 30S subunit head. Binds mRNA in the 70S ribosome, positioning it for translation. In Ralstonia nicotianae (strain ATCC BAA-1114 / GMI1000) (Ralstonia solanacearum), this protein is Small ribosomal subunit protein uS3.